Consider the following 98-residue polypeptide: Prostate and testis expressed protein 3 (98 aa).

A signal peptide spans 1-20 (MNKHFLFLFLLYCLIVAVTS). Residues 21–97 (LQCITCHLRT…CCNYNYCNFK (77 aa)) form the UPAR/Ly6 domain. 4 cysteine pairs are disulfide-bonded: Cys-23–Cys-50, Cys-26–Cys-35, Cys-42–Cys-68, and Cys-72–Cys-88.

It belongs to the PATE family. As to expression, specifically expressed in prostate and testis.

The protein localises to the secreted. The chain is Prostate and testis expressed protein 3 (PATE3) from Homo sapiens (Human).